Consider the following 397-residue polypeptide: CCA-adding enzyme (397 aa).

Gly-26 and Arg-29 together coordinate ATP. Positions 26 and 29 each coordinate CTP. Residues Asp-39 and Asp-41 each contribute to the Mg(2+) site. The ATP site is built by Arg-110, Asp-153, Arg-156, Arg-159, and Arg-162. The CTP site is built by Arg-110, Asp-153, Arg-156, Arg-159, and Arg-162.

This sequence belongs to the tRNA nucleotidyltransferase/poly(A) polymerase family. Bacterial CCA-adding enzyme type 3 subfamily. In terms of assembly, homodimer. Requires Mg(2+) as cofactor.

It catalyses the reaction a tRNA precursor + 2 CTP + ATP = a tRNA with a 3' CCA end + 3 diphosphate. The enzyme catalyses a tRNA with a 3' CCA end + 2 CTP + ATP = a tRNA with a 3' CCACCA end + 3 diphosphate. Catalyzes the addition and repair of the essential 3'-terminal CCA sequence in tRNAs without using a nucleic acid template. Adds these three nucleotides in the order of C, C, and A to the tRNA nucleotide-73, using CTP and ATP as substrates and producing inorganic pyrophosphate. tRNA 3'-terminal CCA addition is required both for tRNA processing and repair. Also involved in tRNA surveillance by mediating tandem CCA addition to generate a CCACCA at the 3' terminus of unstable tRNAs. While stable tRNAs receive only 3'-terminal CCA, unstable tRNAs are marked with CCACCA and rapidly degraded. This is CCA-adding enzyme from Bacillus cereus (strain ATCC 10987 / NRS 248).